A 237-amino-acid polypeptide reads, in one-letter code: Segregation and condensation protein A (237 aa).

Belongs to the ScpA family. Component of a cohesin-like complex composed of ScpA, ScpB and the Smc homodimer, in which ScpA and ScpB bind to the head domain of Smc. The presence of the three proteins is required for the association of the complex with DNA.

The protein resides in the cytoplasm. Participates in chromosomal partition during cell division. May act via the formation of a condensin-like complex containing Smc and ScpB that pull DNA away from mid-cell into both cell halves. This Streptococcus thermophilus (strain CNRZ 1066) protein is Segregation and condensation protein A.